The primary structure comprises 263 residues: Putative alpha/beta hydrolase L404 (263 aa).

The N-myristoyl glycine; by host moiety is linked to residue Gly-2.

It belongs to the AB hydrolase superfamily.

This Acanthamoeba polyphaga (Amoeba) protein is Putative alpha/beta hydrolase L404.